Consider the following 812-residue polypeptide: G patch domain-containing protein 1 homolog (812 aa).

The disordered stretch occupies residues 1-42 (MNRKKLAAYGQEFEDDDEEGSSVSKKPTQIHEEIATDEKGKR). Residues 29 to 40 (QIHEEIATDEKG) are compositionally biased toward basic and acidic residues. The G-patch domain maps to 145-191 (SNSIGVRMLRSMGWREGRGIGLANVKQKQKRGGESSEAQFDREQASK). Disordered regions lie at residues 384–416 (ANEVEKRDNERGGGEAEEDRDRRQRNRIEFPDE) and 584–812 (NEIE…EEKK). The segment covering 586–609 (IEMRERLLKSRAQRGAEEKKRNQS) has biased composition (basic and acidic residues). Acidic residues-rich tracts occupy residues 610 to 630 (DDDDEKEYDDKDSDEEEENEA) and 653 to 668 (DGADSDESNSEDEEAE). A compositionally biased stretch (basic and acidic residues) spans 669 to 720 (EKERQEILKKREEDLKRRREIVEKKEEENRKRVEKELKELENRDLLRVSKQQ). The segment covering 761 to 794 (MKKKKKDKKEKEKKKKSKKSKKSKKEKKTKRKHS) has biased composition (basic residues). Acidic residues predominate over residues 800-812 (DSGDNSDGWEEKK).

The protein belongs to the GPATCH1 family.

The chain is G patch domain-containing protein 1 homolog from Caenorhabditis elegans.